The primary structure comprises 195 residues: Ethylene-responsive transcription factor ERF018 (195 aa).

The segment covering 1 to 13 (MVKQAMKEEEKKR) has biased composition (basic and acidic residues). A disordered region spans residues 1–22 (MVKQAMKEEEKKRNTAMQSKYK). The AP2/ERF DNA-binding region spans 20–77 (KYKGVRKRKWGKWVSEIRLPHSRERIWLGSYDTPEKAARAFDAAQFCLRGGDANFNFP).

The protein belongs to the AP2/ERF transcription factor family. ERF subfamily.

The protein resides in the nucleus. In terms of biological role, probably acts as a transcriptional activator. Binds to the GCC-box pathogenesis-related promoter element. May be involved in the regulation of gene expression by stress factors and by components of stress signal transduction pathways. The protein is Ethylene-responsive transcription factor ERF018 (ERF018) of Arabidopsis thaliana (Mouse-ear cress).